A 357-amino-acid polypeptide reads, in one-letter code: Peptide chain release factor 1 (357 aa).

Glutamine 234 is modified (N5-methylglutamine). The span at 284–307 (KKQEQRSNDRKQQVGSGDRSERIR) shows a compositional bias: basic and acidic residues. The segment at 284-313 (KKQEQRSNDRKQQVGSGDRSERIRTYNFPQ) is disordered.

It belongs to the prokaryotic/mitochondrial release factor family. Post-translationally, methylated by PrmC. Methylation increases the termination efficiency of RF1.

Its subcellular location is the cytoplasm. Functionally, peptide chain release factor 1 directs the termination of translation in response to the peptide chain termination codons UAG and UAA. This is Peptide chain release factor 1 from Borrelia turicatae (strain 91E135).